Reading from the N-terminus, the 772-residue chain is MDALASEEYASQSKLLQEFTNAPSIDGAWVFQTNNEDRSTAMYSISQTNLLANNKRKYILFSHIMRNGTNLLDFQWSPFPIQMDGVSAVVPSPSGSKLLVVRNGEKGSPTKLEIVDQSHVEKEIHVAQSVHGPLYTDEWFHGISWNQEETLIAYIAEDSPEPKPVFDDTGYRKEGSSEKDCNNWKGQGDWEEDWGETYSKKGRPSLFVLDINSGEVRAAKGISRSLSVGQVVWAPPSSCGRQKYLIFVGWLEHNGFQNTPRKLGIKYCSNRPCSLYSTLCPFEESDVDNAPASDSKLEPASVAINLTPSISSAFFPRFSKDGKLLVFLSANRAVDSGAHNATDSLHKINWPSDWKMDQYLEITDVIPIVMCPQDGCFPGLYCSSMLSNPWLSDRCTMILTSAWRSTEVILSIDVLSGKATRISPENSEYSWSALAVDGHNVLAVSSSPIDPPQIKYGHQVSLKDQTCTWVWDEVNNNPLMAANNKVKALLSHHQFSILKIPVTNPSDDLSDGSKLPFEAIFVSCKDSSHKPTILVLHGGPHSVSVSSYSKTSAFLASLGFNLLIVNYRGTPGFGEEALQSLPGKVGSQDVQDCLTALDYVIEGGLIDASKVAVIGISHGGFLTTHLIGQAPDRFMVAAARNPVCNLSLMIGTTDIPDWCYAVACGSEGRQHASESPSPDHLRLFYQKSPIAHISKVKAPLLMLLGGADLRVPISNGLQYARALRERGGEIRIMMFPDDIHEINIPQSDFESFLNIGVWFKKHLSISASDASA.

Residues Ser-617, Asp-708, and His-740 each act as charge relay system in the active site.

Belongs to the peptidase S9C family. As to quaternary structure, homotetramer.

It is found in the cytoplasm. It catalyses the reaction Cleavage of an N-acetyl or N-formyl amino acid from the N-terminus of a polypeptide.. Functionally, catalyzes the hydrolysis of the N-terminal peptide bond of an N-acetylated peptide to generate an N-acetylated amino acid and a peptide with a free N-terminus. This chain is Acylamino-acid-releasing enzyme 2, found in Oryza sativa subsp. japonica (Rice).